The primary structure comprises 398 residues: MDTHAFKRSLHHSDRYNRRGFGRADEVAGSLEQAYQSSLIGSIRDNGYSLTHGRLKVRLAEAFGFCWGVERAVAMAYETRRHYPQERIWITNEIIHNPSVNDHLREMDVLFISVEGGVKDFSGVATGDVVILPAFGATVQEMQLLNERGCHIVDTTCPWVSKVWTTVEKHKKQSFTSIIHGKVKHEETLATSSFAGTYLVVLDLEEARLVADYILGKGNRESFMERFSKACSPGFDPDRDLEHLGVANQTTMLKSETEEIGRLFERTMLSKYGPTDLNEHFLAFNTICDATQERQDAMFSLVDETVDLMVVIGGYNSSNTTHLQEIAVSRGIRSFHIDTPERIHTDNSIEHKPLGEELTVEELFLPSGPVTVGITSGASTPDRVVEHVIQRLIALSEN.

Cys66 provides a ligand contact to [4Fe-4S] cluster. Residue His96 coordinates (2E)-4-hydroxy-3-methylbut-2-enyl diphosphate. Residue His96 participates in dimethylallyl diphosphate binding. His96 serves as a coordination point for isopentenyl diphosphate. Cys157 provides a ligand contact to [4Fe-4S] cluster. Residue His185 coordinates (2E)-4-hydroxy-3-methylbut-2-enyl diphosphate. Dimethylallyl diphosphate is bound at residue His185. His185 contributes to the isopentenyl diphosphate binding site. Glu187 (proton donor) is an active-site residue. Position 250 (Thr250) interacts with (2E)-4-hydroxy-3-methylbut-2-enyl diphosphate. Cys288 serves as a coordination point for [4Fe-4S] cluster. Residues Ser317, Ser318, Asn319, and Ser379 each contribute to the (2E)-4-hydroxy-3-methylbut-2-enyl diphosphate site. Residues Ser317, Ser318, Asn319, and Ser379 each contribute to the dimethylallyl diphosphate site. Isopentenyl diphosphate-binding residues include Ser317, Ser318, Asn319, and Ser379.

Belongs to the IspH family. [4Fe-4S] cluster serves as cofactor.

The enzyme catalyses isopentenyl diphosphate + 2 oxidized [2Fe-2S]-[ferredoxin] + H2O = (2E)-4-hydroxy-3-methylbut-2-enyl diphosphate + 2 reduced [2Fe-2S]-[ferredoxin] + 2 H(+). It catalyses the reaction dimethylallyl diphosphate + 2 oxidized [2Fe-2S]-[ferredoxin] + H2O = (2E)-4-hydroxy-3-methylbut-2-enyl diphosphate + 2 reduced [2Fe-2S]-[ferredoxin] + 2 H(+). It participates in isoprenoid biosynthesis; dimethylallyl diphosphate biosynthesis; dimethylallyl diphosphate from (2E)-4-hydroxy-3-methylbutenyl diphosphate: step 1/1. The protein operates within isoprenoid biosynthesis; isopentenyl diphosphate biosynthesis via DXP pathway; isopentenyl diphosphate from 1-deoxy-D-xylulose 5-phosphate: step 6/6. In terms of biological role, catalyzes the conversion of 1-hydroxy-2-methyl-2-(E)-butenyl 4-diphosphate (HMBPP) into a mixture of isopentenyl diphosphate (IPP) and dimethylallyl diphosphate (DMAPP). Acts in the terminal step of the DOXP/MEP pathway for isoprenoid precursor biosynthesis. In Synechococcus sp. (strain CC9311), this protein is 4-hydroxy-3-methylbut-2-enyl diphosphate reductase.